A 161-amino-acid polypeptide reads, in one-letter code: Ragulator complex protein LAMTOR1 (161 aa).

The disordered stretch occupies residues Met1–Leu43. The N-myristoyl glycine moiety is linked to residue Gly2. Residues Cys3 and Cys4 are each lipidated (S-palmitoyl cysteine). Lys20 is covalently cross-linked (Glycyl lysine isopeptide (Lys-Gly) (interchain with G-Cter in ubiquitin)). Ser27 carries the post-translational modification Phosphoserine. Position 28 is a phosphothreonine (Thr28). A Glycyl lysine isopeptide (Lys-Gly) (interchain with G-Cter in ubiquitin) cross-link involves residue Lys31. Residues Ser42 and Ser56 each carry the phosphoserine modification. Lys60 participates in a covalent cross-link: Glycyl lysine isopeptide (Lys-Gly) (interchain with G-Cter in ubiquitin). Position 98 is a phosphoserine (Ser98). Residues Lys103 and Lys104 each participate in a glycyl lysine isopeptide (Lys-Gly) (interchain with G-Cter in ubiquitin) cross-link. The tract at residues Ser121–Pro161 is interaction with LAMTOR2 and LAMTOR3. At Ser141 the chain carries Phosphoserine.

This sequence belongs to the LAMTOR1 family. In terms of assembly, part of the Ragulator complex composed of LAMTOR1, LAMTOR2, LAMTOR3, LAMTOR4 and LAMTOR5. LAMTOR4 and LAMTOR5 form a heterodimer that interacts, through LAMTOR1, with a LAMTOR2, LAMTOR3 heterodimer. Interacts with LAMTOR2 and LAMTOR3; the interaction is direct. The Ragulator complex interacts with both the mTORC1 complex and heterodimers constituted of the Rag GTPases RagA/RRAGA, RagB/RRAGB, RagC/RRAGC and RagD/RRAGD; regulated by amino acid availability. The Ragulator complex interacts with SLC38A9; the probable amino acid sensor. Component of the lysosomal folliculin complex (LFC), composed of FLCN, FNIP1 (or FNIP2), RagA/RRAGA or RagB/RRAGB GDP-bound, RagC/RRAGC or RagD/RRAGD GTP-bound, and Ragulator. Associates with the lysosomal V-ATPase complex; interaction promotes the guanine nucleotide exchange factor (GEF) of the Ragulator complex. Interacts with MMP14. Interacts with CDKN1B; prevents the interaction of CDKN1B with RHOA leaving RHOA in a form accessible to activation by ARHGEF2. Interacts with PIP4P1. N-terminal myristoylation and palmitoylation mediates its recruitment to lysosome membranes, thereby promoting localization of the Ragulator complex to lysosomes. N-myristoylation by NMT1 is required for palmitoylation at Cys-3 and Cys-4. Post-translationally, ubiquitinated at Lys-60, Lys-103 and Lys-104 by UBE3A in neurons, promoting its degradation by the proteasome, thereby limiting mTORC1 signaling and activity-dependent synaptic remodeling. Ubiquitination at Lys-20 impairs the association with the lysosomal V-ATPase complex. Deubiquitination at Lys-20 by USP32 promotes the association with the lysosomal V-ATPase complex and subsequent activation of the mTORC1 complex.

Its subcellular location is the lysosome membrane. The protein localises to the late endosome membrane. Key component of the Ragulator complex, a multiprotein complex involved in amino acid sensing and activation of mTORC1, a signaling complex promoting cell growth in response to growth factors, energy levels, and amino acids. Activated by amino acids through a mechanism involving the lysosomal V-ATPase, the Ragulator plays a dual role for the small GTPases Rag (RagA/RRAGA, RagB/RRAGB, RagC/RRAGC and/or RagD/RRAGD): it (1) acts as a guanine nucleotide exchange factor (GEF), activating the small GTPases Rag and (2) mediates recruitment of Rag GTPases to the lysosome membrane. Activated Ragulator and Rag GTPases function as a scaffold recruiting mTORC1 to lysosomes where it is in turn activated. LAMTOR1 is directly responsible for anchoring the Ragulator complex to the lysosomal membrane. LAMTOR1 wraps around the other subunits of the Ragulator complex to hold them in place and interacts with the Rag GTPases, thereby playing a key role in the recruitment of the mTORC1 complex to lysosomes. Also involved in the control of embryonic stem cells differentiation via non-canonical RagC/RRAGC and RagD/RRAGD activation: together with FLCN, it is necessary to recruit and activate RagC/RRAGC and RagD/RRAGD at the lysosomes, and to induce exit of embryonic stem cells from pluripotency via non-canonical, mTOR-independent TFE3 inactivation. Also required for late endosomes/lysosomes biogenesis it may regulate both the recycling of receptors through endosomes and the MAPK signaling pathway through recruitment of some of its components to late endosomes. May be involved in cholesterol homeostasis regulating LDL uptake and cholesterol release from late endosomes/lysosomes. May also play a role in RHOA activation. This chain is Ragulator complex protein LAMTOR1, found in Mus musculus (Mouse).